An 833-amino-acid polypeptide reads, in one-letter code: ERAD-associated E3 ubiquitin-protein ligase component HRD3 (833 aa).

Residues 1-20 form the signal peptide; that stretch reads MITLLLYLCVICNAIVLIRA. Residues Asn-101, Asn-123, and Asn-142 are each glycosylated (N-linked (GlcNAc...) asparagine). One copy of the Sel1-like 1 repeat lies at 103 to 139; it reads SEATYTLSQIHLWSQYNFPHNMTLAHKYLEKFNDLTH. Sel1-like repeat units lie at residues 143-186, 187-222, 413-445, 552-595, 596-627, and 628-663; these read HSAI…QLGN, LKAKQVLAYKYYSGFNVPRNFHKSLVLYRDIAEQLR, GRACIDLGLINQYITNNISQAISYYMKAMKTQA, ETAQ…KQGN, IDAGVVAGDIYFQMQNYSKAMALYQGAALKYS, and IQAIWNLGYMHEHGLGVNRDFHLAKRYYDQVSEHDH. N-linked (GlcNAc...) asparagine glycosylation occurs at Asn-429. N-linked (GlcNAc...) asparagine glycosylation is present at Asn-611. Residues 768–788 traverse the membrane as a helical segment; it reads LVTMGCILGIFLLSILMSTLA. The tract at residues 805-824 is disordered; it reads NGNRQQEQQQQQQAQGPPGW. Low complexity predominate over residues 809 to 819; it reads QQEQQQQQQAQ.

This sequence belongs to the sel-1 family. As to quaternary structure, component of the HRD1 ubiquitin ligase complex which contains the E3 ligase HRD1, its cofactors HRD3, USA1 and DER1, substrate recruiting factor YOS9 and CDC48-binding protein UBX2. Within the complex, interacts directly with HRD1 and YOS9 (via N-terminus). In ERAD-L, HRD3 and YOS9 jointly bind misfolded glycoproteins in the endoplasmic reticulum (ER) lumen. Movement of ERAD-L substrates through the ER membrane is facilitated by HRD1 and DER1 which have lateral gates facing each other and which distort the membrane region between the lateral gates, making it much thinner than a normal phospholipid bilayer. Substrates insert into the membrane as a hairpin loop with one strand interacting with DER1 and the other with HRD1. The HRD1 complex interacts with the heterotrimeric CDC48-NPL4-UFD1 ATPase complex which is recruited by UBX2 via its interaction with CDC48 and which moves ubiquitinated substrates to the cytosol for targeting to the proteasome. The HRD1 complex interacts with the ERAD substrates HMG1 and HMG2. Interacts with KAR2.

The protein resides in the endoplasmic reticulum membrane. In terms of biological role, component of the endoplasmic reticulum quality control (ERQC) system involved in ubiquitin-dependent degradation of misfolded endoplasmic reticulum proteins. Component of the HRD1 ubiquitin ligase complex, which is part of the ERAD-L and ERAD-M pathways responsible for the rapid degradation of soluble lumenal and membrane proteins with misfolded lumenal domains (ERAD-L), or ER-membrane proteins with misfolded transmembrane domains (ERAD-M). ERAD-L substrates are ubiquitinated through HRD1 in conjunction with the E2 ubiquitin-conjugating enzymes UBC1 and UBC7-CUE1. Ubiquitinated substrates are then removed to the cytosol via the action of the CDC48-NPL4-UFD1 ATPase complex and targeted to the proteasome. ERAD-M substrates are processed by the same HRD1-HRD3 core complex, but only a subset of the other components is required for ERAD-M. Stabilizes the HRD1 ubiquitin-protein ligase. Also functions in recruiting misfolded protein substrates in conjunction with YOS9. This chain is ERAD-associated E3 ubiquitin-protein ligase component HRD3 (HRD3), found in Saccharomyces cerevisiae (strain ATCC 204508 / S288c) (Baker's yeast).